The sequence spans 139 residues: MIWKKKYTLEQMNLLSQNTAISHLAIQFSAQGENWLEATMPVDQRTIQPMGFLHGGLSVALAETIGSMAGFCCITENQFVLGLEINANHLRPVKQGIVTARATPIHLGTRTQVWQIEIKDQQDQLCCLSRLTLSVGNHE.

This sequence belongs to the thioesterase PaaI family.

This is Putative esterase PM0788 from Pasteurella multocida (strain Pm70).